A 127-amino-acid chain; its full sequence is Large ribosomal subunit protein bL20 (127 aa).

It belongs to the bacterial ribosomal protein bL20 family.

In terms of biological role, binds directly to 23S ribosomal RNA and is necessary for the in vitro assembly process of the 50S ribosomal subunit. It is not involved in the protein synthesizing functions of that subunit. The sequence is that of Large ribosomal subunit protein bL20 from Streptomyces griseus subsp. griseus (strain JCM 4626 / CBS 651.72 / NBRC 13350 / KCC S-0626 / ISP 5235).